Reading from the N-terminus, the 432-residue chain is FMRFamide peptide receptor frpr-18 (432 aa).

Residues 1 to 8 (MESQQLMA) are Extracellular-facing. A helical membrane pass occupies residues 9 to 29 (CAILVIVLVGIFGNSLSFILF). At 30-42 (SRPHMRSSSVNVL) the chain is on the cytoplasmic side. The helical transmembrane segment at 43–63 (LCALSFFDFSLLTLSIPIFVI) threads the bilayer. Over 64–84 (PNLDLWANDLSLSTYMAYILK) the chain is Extracellular. The chain crosses the membrane as a helical span at residues 85 to 105 (LIYPINLMMQTCSVYIMVMIT). Over 106–128 (LERWVAVCRPLQVRVWCTPRKSR) the chain is Cytoplasmic. A helical membrane pass occupies residues 129-149 (NAILVIIVSAFLYNFVRFFEY). Residues 150-176 (RFVVTESGALYEKWLRDPGKHRWYYVG) are Extracellular-facing. A helical membrane pass occupies residues 177–197 (YYTILYIVTHFLVPFSVMAFA). The Cytoplasmic portion of the chain corresponds to 198 to 225 (NGHVIVAMCKLSKTRQMLTRQQQREQST). A helical transmembrane segment spans residues 226 to 246 (TVMLLIVTFVFAICNTLPFLL). The Extracellular segment spans residues 247–271 (NVSESIFPTLFQDESTRGLAYWLND). The chain crosses the membrane as a helical span at residues 272–292 (LSNLLVVLNSGTTFIIYFTFS). The Cytoplasmic portion of the chain corresponds to 293 to 432 (EKYRQTLVFI…GEPDSPCQPC (140 aa)). 2 disordered regions span residues 328–349 (ISSETGGQIQRQGSKMSNSSRS) and 388–411 (KLPSEKRKKKLHKMSAVEHRGMPE).

Belongs to the G-protein coupled receptor 1 family. As to expression, expressed in a subset of neurons in the head, midbody, and tail, including AIY, ASI, BAG, URA, CAN, I6, PVQ, DVA, RIM, and VC, and in the anal sphincter and intestinal muscles. Expression from the ASI neurons is involved in promoting arousal.

It localises to the cell membrane. In terms of biological role, G-protein coupled receptor for flp-2 neuropeptides. May act through the G(q) alpha type of G proteins. Involved in mediating arousal from the sleep-like state called lethargus, which occurs during molting between larval and adult stages, in part by regulating touch sensitivity, and working in concert with neuropeptide pdf-1. The protein is FMRFamide peptide receptor frpr-18 of Caenorhabditis elegans.